Consider the following 224-residue polypeptide: Toxin coregulated pilin (224 aa).

The propeptide at 1–25 (MQLLKQLFKKKFVKEEHDKKTGQEG) is atypical leader sequence. Met-26 bears the N-methylmethionine mark. The helical transmembrane segment at 26–46 (MTLLEVIIVLGIMGVVSAGVV) threads the bilayer. A disulfide bridge connects residues Cys-145 and Cys-211.

It localises to the fimbrium. The protein resides in the membrane. Major component of the toxin co-regulated pilus (tcp) which is a type IV pilus essential for bacterial aggregation and subsequent colonization in the host small intestine. This Vibrio cholerae serotype O1 (strain ATCC 39315 / El Tor Inaba N16961) protein is Toxin coregulated pilin (tcpA).